Here is a 425-residue protein sequence, read N- to C-terminus: Caveolae-associated protein 2 (425 aa).

Residues 1–42 (MGEDAAQAEKFQHPGSDMRQEKPSSPSPMPSSTPSPSLNLGN) are disordered. Glycine 2 is modified (N-acetylglycine). An interaction with CAVIN1 region spans residues 2–168 (GEDAAQAEKF…IFQEENEIPA (167 aa)). A compositionally biased stretch (basic and acidic residues) spans 10-22 (KFQHPGSDMRQEK). Phosphoserine is present on residues serine 27, serine 35, serine 37, and serine 51. Coiled coils occupy residues 61–82 (LLDK…MEQR) and 125–154 (TRAV…RRNH). The tract at residues 62–100 (LDKLVNMLDAVQENQHKMEQRQISLEGSVKGIQNDLTKL) is leucine-zipper. A phosphothreonine mark is found at threonine 196 and threonine 199. Disordered regions lie at residues 199–234 (TVDL…IKRS) and 271–425 (IKKS…HQTS). A phosphoserine mark is found at serine 203, serine 204, and serine 218. Over residues 203 to 219 (SSDDDLPHDEEALEDSA) the composition is skewed to acidic residues. The stretch at 210 to 268 (HDEEALEDSAEEKVEESRAEKIKRSSLKKVDSLKKAFSRQNIEKKMNKLGTKIVSVERR) forms a coiled coil. Over residues 220 to 234 (EEKVEESRAEKIKRS) the composition is skewed to basic and acidic residues. A compositionally biased stretch (polar residues) spans 274 to 287 (SLTSNHQKISSGKS). Phosphoserine is present on residues serine 283, serine 284, serine 287, serine 288, and serine 293. Basic and acidic residues predominate over residues 303-317 (REGESHAENETKSED). 4 positions are modified to phosphoserine: serine 332, serine 341, serine 366, and serine 370. Threonine 375 bears the Phosphothreonine mark. Positions 376–385 (IVEDEEEESV) are enriched in acidic residues. Tyrosine 395 carries the post-translational modification Phosphotyrosine. Serine 403 bears the Phosphoserine mark.

Belongs to the CAVIN family. Component of the CAVIN complex composed of CAVIN1, CAVIN2, CAVIN3 and CAVIN4. Binds to PRKCA in the presence of phosphatidylserine. Interacts with CAVIN4; this augments the transactivation of NPPA by CAVIN4. Interacts with CAVIN1. Interacts with CAV3. Phosphorylated on Ser residues. As to expression, highly expressed in heart and lung, and expressed at lower levels in brain, kidney, liver, pancreas, placenta, and skeletal muscle.

The protein resides in the cytoplasm. It localises to the cytosol. Its subcellular location is the membrane. The protein localises to the caveola. Its function is as follows. Plays an important role in caveolar biogenesis and morphology. Regulates caveolae morphology by inducing membrane curvature within caveolae. Plays a role in caveola formation in a tissue-specific manner. Required for the formation of caveolae in the lung and fat endothelia but not in the heart endothelia. Negatively regulates the size or stability of CAVIN complexes in the lung endothelial cells. May play a role in targeting PRKCA to caveolae. The chain is Caveolae-associated protein 2 from Homo sapiens (Human).